Consider the following 234-residue polypeptide: BTB/POZ domain-containing protein KCTD5 (234 aa).

Ala2 is modified (N-acetylalanine). The BTB domain maps to 44–146 (KWVRLNVGGT…LVKDKIRERD (103 aa)). The disordered stretch occupies residues 213–234 (PYGTTSEPSEKAKILQERGSRM). The segment covering 220-234 (PSEKAKILQERGSRM) has biased composition (basic and acidic residues).

Homopentamer. Interacts (via C-terminus) with GRASP55/GORASP2. Interacts with CUL3 and with ubiquitinated proteins. Interacts with CRY1.

Its subcellular location is the cytoplasm. It localises to the cytosol. It is found in the nucleus. Its interaction with CUL3 suggests that it may act as a substrate adapter in some E3 ligase complex. Does not affect the function of Kv channel Kv2.1/KCNB1, Kv1.2/KCNA2, Kv4.2/KCND2 and Kv3.4/KCNC4. This Mus musculus (Mouse) protein is BTB/POZ domain-containing protein KCTD5 (Kctd5).